The following is a 659-amino-acid chain: ATP-binding cassette sub-family D member 3 (659 aa).

Positions 1–61 (MAAFSKYLTA…GKKERAVVDK (61 aa)) are interaction with PEX19. The N-linked (GlcNAc...) asparagine glycan is linked to N12. N6-acetyllysine is present on K61. Residues 84–104 (GYLVLIAVMLVSRTYCDVWMI) form a helical membrane-spanning segment. Residues 85–372 (YLVLIAVMLV…MLLRMSQALG (288 aa)) form the ABC transmembrane type-1 domain. The N-linked (GlcNAc...) asparagine glycan is linked to N106. A helical membrane pass occupies residues 126–146 (LLNFIAAMPLISLVNNFLKYG). An N-linked (GlcNAc...) asparagine glycan is attached at N206. A helical transmembrane segment spans residues 224–244 (AIGAQGPASMMAYLVVSGLFL). K260 is modified (N6-acetyllysine). A helical transmembrane segment spans residues 313-333 (MGFIDSIIAKYLATVVGYLVV). K399 carries the N6-acetyllysine modification. Residues 440–659 (IKFDHVPLAT…ITEDTVEFGS (220 aa)) enclose the ABC transporter domain. 473–480 (GPNGCGKS) lines the ATP pocket. Residue K533 is modified to N6-acetyllysine. S659 carries the post-translational modification Phosphoserine.

It belongs to the ABC transporter superfamily. ABCD family. Peroxisomal fatty acyl CoA transporter (TC 3.A.1.203) subfamily. Homodimers. Can form heterodimers with ABCD1 and ABCD2. Dimerization is necessary to form an active transporter. Interacts with PEX19; mediates the targeting of ABCD3 to peroxisomes. In terms of processing, ubiquitinated by PEX2 during pexophagy in response to starvation, leading to its degradation.

Its subcellular location is the peroxisome membrane. The enzyme catalyses a very long-chain fatty acyl-CoA + H2O = a very long-chain fatty acid + CoA + H(+). It carries out the reaction a very long-chain fatty acid(in) + ATP + H2O = a very long-chain fatty acid(out) + ADP + phosphate + H(+). The catalysed reaction is a long-chain fatty acyl-CoA + H2O = a long-chain fatty acid + CoA + H(+). It catalyses the reaction a long-chain fatty acid(in) + ATP + H2O = a long-chain fatty acid(out) + ADP + phosphate + H(+). The enzyme catalyses pristanoyl-CoA + H2O = 2,6,10,14-tetramethylpentadecanoate + CoA + H(+). It carries out the reaction 2,6,10,14-tetramethylpentadecanoate(in) + ATP + H2O = 2,6,10,14-tetramethylpentadecanoate(out) + ADP + phosphate + H(+). The catalysed reaction is hexadecanedioyl-CoA + H2O = hexadecanedioate + CoA + H(+). It catalyses the reaction hexadecanedioate(in) + ATP + H2O = hexadecanedioate(out) + ADP + phosphate + H(+). The enzyme catalyses (5Z,8Z,11Z,14Z,17Z)-eicosapentaenoyl-CoA + H2O = (5Z,8Z,11Z,14Z,17Z)-eicosapentaenoate + CoA + H(+). It carries out the reaction (5Z,8Z,11Z,14Z,17Z)-eicosapentaenoate(in) + ATP + H2O = (5Z,8Z,11Z,14Z,17Z)-eicosapentaenoate(out) + ADP + phosphate + H(+). The catalysed reaction is (4Z,7Z,10Z,13Z,16Z,19Z)-docosahexaenoyl-CoA + H2O = (4Z,7Z,10Z,13Z,16Z,19Z)-docosahexaenoate + CoA + H(+). It catalyses the reaction (4Z,7Z,10Z,13Z,16Z,19Z)-docosahexaenoate(in) + ATP + H2O = (4Z,7Z,10Z,13Z,16Z,19Z)-docosahexaenoate(out) + ADP + phosphate + H(+). In terms of biological role, broad substrate specificity ATP-dependent transporter of the ATP-binding cassette (ABC) family that catalyzes the transport of long-chain fatty acids (LCFA)-CoA, dicarboxylic acids-CoA, long-branched-chain fatty acids-CoA and bile acids from the cytosol to the peroxisome lumen for beta-oxydation. Has fatty acyl-CoA thioesterase and ATPase activities. Probably hydrolyzes fatty acyl-CoAs into free fatty acids prior to their ATP-dependent transport into peroxisomes. Thus, play a role in regulation of LCFAs and energy metabolism namely, in the degradation and biosynthesis of fatty acids by beta-oxidation. The chain is ATP-binding cassette sub-family D member 3 from Homo sapiens (Human).